A 131-amino-acid chain; its full sequence is UPF0382 inner membrane protein YgdD (131 aa).

At 1–4 (MTSR) the chain is on the periplasmic side. A helical transmembrane segment spans residues 5–25 (FMLIFAAISGFIFVALGAFGA). Residues 26 to 64 (HVLSKTMGAVEMGWIQTGLEYQAFHTLAILGLAVAMQRR) are Cytoplasmic-facing. The helical transmembrane segment at 65–85 (ISIWFYWSSVFLALGTVLFSG) threads the bilayer. Topologically, residues 86–97 (SLYCLALSHLRL) are periplasmic. A helical membrane pass occupies residues 98–118 (WAFVTPVGGVSFLAGWALMLV). The Cytoplasmic segment spans residues 119 to 131 (GAIRLKRKGVSHE).

Belongs to the UPF0382 family.

The protein localises to the cell inner membrane. The polypeptide is UPF0382 inner membrane protein YgdD (ygdD) (Escherichia coli O157:H7).